We begin with the raw amino-acid sequence, 774 residues long: Fe(3+) dicitrate transport protein FecA (774 aa).

An N-terminal signal peptide occupies residues 1–33; the sequence is MTPLRVFRKTTPLVNTIRLSLLPLAGLSFSAFA. The TonB box motif lies at 56 to 63; sequence FTLSVDAS. Positions 129–250 constitute a TBDR plug domain; sequence DVFEHAGARD…VGGVVNFVTR (122 aa). The region spanning 255 to 774 is the TBDR beta-barrel domain; that stretch reads DFGIEAGVEG…TLYMQGSLKF (520 aa). The TonB C-terminal box signature appears at 757-774; sequence GIYAGQPRTLYMQGSLKF.

It belongs to the TonB-dependent receptor family. In terms of assembly, interacts (via periplasmic N-terminus) with FecR (via periplasmic C-terminus).

It localises to the cell outer membrane. FecA is the outer membrane receptor protein in the Fe(3+) dicitrate transport system. The polypeptide is Fe(3+) dicitrate transport protein FecA (fecA) (Escherichia coli (strain K12)).